The sequence spans 165 residues: MAPKKAKKKVEGGSNVFSMFEQTQIQEFKEAFTIMDQNRDGFIDKADLRDTFAALGRLNVKNEELEDMVKEAPGPINFTVFLTMFGEKLKGTDPEETILNAFKIFDPEGKGHIKADYIKEMLMTQEGRFSQEEINQMFAAFPPDVSGNLDYKNLCYVITHGEEKD.

The residue at position 2 (Ala2) is a N,N,N-trimethylalanine. EF-hand domains follow at residues 23–58, 93–128, and 129–164; these read TQIQ…LGRL, DPEE…QEGR, and FSQE…GEEK. Ca(2+) contacts are provided by Asp36, Asn38, Asp40, and Asp47.

In terms of assembly, myosin is a hexamer of 2 heavy chains and 4 light chains. In terms of processing, the N-terminus is blocked. N,N,N-trimethylalanine, found in other myosin light chains would not have been detected in the N-terminal tryptic peptide in PubMed:7319048 because it would remain trimethylated and ninhydrin negative after hydrolysis.

This is Myosin regulatory light chain 2B, cardiac muscle isoform from Gallus gallus (Chicken).